Consider the following 449-residue polypeptide: Tubulin beta chain (449 aa).

GTP is bound by residues Gln11, Glu69, Ser138, Gly142, Thr143, Gly144, Asn204, and Asn226. A Mg(2+)-binding site is contributed by Glu69. The disordered stretch occupies residues 426-449; that stretch reads QDATAEEEGEFDEEEGEMGAEEGA. The span at 429–449 shows a compositional bias: acidic residues; that stretch reads TAEEEGEFDEEEGEMGAEEGA.

The protein belongs to the tubulin family. In terms of assembly, dimer of alpha and beta chains. A typical microtubule is a hollow water-filled tube with an outer diameter of 25 nm and an inner diameter of 15 nM. Alpha-beta heterodimers associate head-to-tail to form protofilaments running lengthwise along the microtubule wall with the beta-tubulin subunit facing the microtubule plus end conferring a structural polarity. Microtubules usually have 13 protofilaments but different protofilament numbers can be found in some organisms and specialized cells. Requires Mg(2+) as cofactor.

Its subcellular location is the cytoplasm. It localises to the cytoskeleton. Tubulin is the major constituent of microtubules, a cylinder consisting of laterally associated linear protofilaments composed of alpha- and beta-tubulin heterodimers. Microtubules grow by the addition of GTP-tubulin dimers to the microtubule end, where a stabilizing cap forms. Below the cap, tubulin dimers are in GDP-bound state, owing to GTPase activity of alpha-tubulin. This is Tubulin beta chain from Toxoplasma gondii.